A 235-amino-acid polypeptide reads, in one-letter code: tRNA (guanine-N(7)-)-methyltransferase (235 aa).

Residues glycine 60, 83-84 (EI), 116-117 (NA), and leucine 136 contribute to the S-adenosyl-L-methionine site. Aspartate 139 is an active-site residue. 214-216 (SEE) is an S-adenosyl-L-methionine binding site.

Belongs to the class I-like SAM-binding methyltransferase superfamily. TrmB family.

The protein resides in the nucleus. It catalyses the reaction guanosine(46) in tRNA + S-adenosyl-L-methionine = N(7)-methylguanosine(46) in tRNA + S-adenosyl-L-homocysteine. It functions in the pathway tRNA modification; N(7)-methylguanine-tRNA biosynthesis. Its function is as follows. Catalyzes the formation of N(7)-methylguanine at position 46 (m7G46) in tRNA. The protein is tRNA (guanine-N(7)-)-methyltransferase of Anopheles gambiae (African malaria mosquito).